The primary structure comprises 275 residues: Intercellular adhesion molecule 2 (275 aa).

A signal peptide spans 1–24 (MSSFSYRTLTVALFALICCPGSDE). Residues 25 to 223 (KVFEVHVRPK…EIYEPVSDSQ (199 aa)) lie on the Extracellular side of the membrane. Positions 41-98 (KGSLKVNCSTTCNQPEVGGLETSLDKILLDEQAQWKHYLVSNISHDTVLQCHFTCSGK) constitute an Ig-like C2-type 1 domain. N-linked (GlcNAc...) asparagine glycosylation is found at Asn47, Asn82, Asn105, Asn153, Asn176, and Asn187. Cystine bridges form between Cys48–Cys91 and Cys52–Cys95. The region spanning 127-197 (GKSFTIECRV…FSCLAVLDLM (71 aa)) is the Ig-like C2-type 2 domain. Residues Cys134 and Cys190 are joined by a disulfide bond. Residues 224-248 (MVIIVTVVSVLLSLFVTSVLLCFIF) form a helical membrane-spanning segment. The Cytoplasmic segment spans residues 249-275 (GQHLRQQRMGTYGVRAAWRRLPQAFRP). Residues 251–275 (HLRQQRMGTYGVRAAWRRLPQAFRP) are required for interaction with EZR, MSN and RDX and co-localization to microvilli.

It belongs to the immunoglobulin superfamily. ICAM family. As to quaternary structure, interacts with RDX, EZR and MSN.

The protein localises to the membrane. The protein resides in the cell projection. It is found in the microvillus. Its function is as follows. ICAM proteins are ligands for the leukocyte adhesion protein LFA-1 (integrin alpha-L/beta-2). ICAM2 may play a role in lymphocyte recirculation by blocking LFA-1-dependent cell adhesion. It mediates adhesive interactions important for antigen-specific immune response, NK-cell mediated clearance, lymphocyte recirculation, and other cellular interactions important for immune response and surveillance. This Pan troglodytes (Chimpanzee) protein is Intercellular adhesion molecule 2 (ICAM2).